Here is a 31-residue protein sequence, read N- to C-terminus: Scolopendra 20566.01 Da toxin (31 aa).

It belongs to the CRISP family. Venom allergen 5-like subfamily. In terms of processing, contains 3 disulfide bonds. As to expression, expressed by the venom gland.

It localises to the secreted. The polypeptide is Scolopendra 20566.01 Da toxin (Scolopendra angulata (Barbados giant red centipede)).